The primary structure comprises 258 residues: Small ribosomal subunit protein uS2 (258 aa).

A disordered region spans residues 234-258 (ETANAEEAMQKAAAVEAAAEAAPAQ). Residues 236-258 (ANAEEAMQKAAAVEAAAEAAPAQ) show a composition bias toward low complexity.

This sequence belongs to the universal ribosomal protein uS2 family.

The protein is Small ribosomal subunit protein uS2 of Desulfovibrio desulfuricans (strain ATCC 27774 / DSM 6949 / MB).